The following is an 87-amino-acid chain: Small ribosomal subunit protein uS15 (87 aa).

This sequence belongs to the universal ribosomal protein uS15 family. Part of the 30S ribosomal subunit. Forms a bridge to the 50S subunit in the 70S ribosome, contacting the 23S rRNA.

In terms of biological role, one of the primary rRNA binding proteins, it binds directly to 16S rRNA where it helps nucleate assembly of the platform of the 30S subunit by binding and bridging several RNA helices of the 16S rRNA. Functionally, forms an intersubunit bridge (bridge B4) with the 23S rRNA of the 50S subunit in the ribosome. The sequence is that of Small ribosomal subunit protein uS15 from Clostridium beijerinckii (strain ATCC 51743 / NCIMB 8052) (Clostridium acetobutylicum).